A 56-amino-acid chain; its full sequence is Botcinic acid biosynthesis cluster B protein 14 (56 aa).

It functions in the pathway polyketide biosynthesis. Functionally, part of the gene cluster B that mediates the biosynthesis of botcinic acid and its botcinin derivatives, acetate-derived polyketides that contribute to virulence when combined with the sesquiterpene botrydial. Botcinic acid and its derivatives have been shown to induce chlorosis and necrosis during host plant infection, but also have antifungal activities. Two polyketide synthases, BOA6 and BOA9, are involved in the biosynthesis of botcinins. BOA6 mediates the formation of the per-methylated tetraketide core by condensation of four units of malonyl-CoA with one unit of acetyl-CoA, which would be methylated in activated methylene groups to yield a bicyclic acid intermediate that could then either be converted to botrylactone derivatives or lose the starter acetate unit through a retro-Claisen type C-C bond cleavage to yield botcinin derivatives. The second polyketide synthase, BOA9, is probably required for the biosynthesis of the tetraketide side chain of botcinins. The methyltransferase (MT) domain within BOA6 is probably responsible for the incorporation of four methyl groups. The trans-enoyl reductase BOA5 might take over the enoyl reductase function of BOA6 that misses an ER domain. The monooxygenases BOA2, BOA3 and BOA4 might be involved in further hydroxylations at C4, C5 and C8, whereas BOA7, close to BOA9, could potentially be involved in the hydroxylation at C4 in the side chain of botcinins. This is Botcinic acid biosynthesis cluster B protein 14 from Botryotinia fuckeliana (strain B05.10) (Noble rot fungus).